The chain runs to 259 residues: Ribosomal RNA small subunit methyltransferase J (259 aa).

S-adenosyl-L-methionine-binding positions include 107–108, 123–124, 159–160, and D177; these read RD, ER, and SS.

This sequence belongs to the methyltransferase superfamily. RsmJ family.

The protein resides in the cytoplasm. It carries out the reaction guanosine(1516) in 16S rRNA + S-adenosyl-L-methionine = N(2)-methylguanosine(1516) in 16S rRNA + S-adenosyl-L-homocysteine + H(+). Its function is as follows. Specifically methylates the guanosine in position 1516 of 16S rRNA. The sequence is that of Ribosomal RNA small subunit methyltransferase J from Shewanella loihica (strain ATCC BAA-1088 / PV-4).